The following is a 902-amino-acid chain: HTH-type transcriptional regulator MalT (902 aa).

39–46 (SPAGYGKT) is a binding site for ATP. The region spanning 832 to 897 (ELVRTSPLTQ…EAIVTAENLL (66 aa)) is the HTH luxR-type domain. The H-T-H motif DNA-binding region spans 856–875 (NEQIAQELDVAGTTIKTHIR).

It belongs to the MalT family. As to quaternary structure, monomer in solution. Oligomerizes to an active state in the presence of the positive effectors ATP and maltotriose.

Activated by ATP and maltotriose, which are both required for DNA binding. In terms of biological role, positively regulates the transcription of the maltose regulon whose gene products are responsible for uptake and catabolism of malto-oligosaccharides. Specifically binds to the promoter region of its target genes, recognizing a short DNA motif called the MalT box. The polypeptide is HTH-type transcriptional regulator MalT (Vibrio campbellii (strain ATCC BAA-1116)).